A 302-amino-acid chain; its full sequence is uncharacterized protein (302 aa).

Residue Glu-48 is part of the active site.

The protein belongs to the PhzF family.

This is an uncharacterized protein from Clostridium acetobutylicum (strain ATCC 824 / DSM 792 / JCM 1419 / IAM 19013 / LMG 5710 / NBRC 13948 / NRRL B-527 / VKM B-1787 / 2291 / W).